The chain runs to 319 residues: tRNA pseudouridine synthase B (319 aa).

Aspartate 49 (nucleophile) is an active-site residue.

This sequence belongs to the pseudouridine synthase TruB family. Type 1 subfamily.

The enzyme catalyses uridine(55) in tRNA = pseudouridine(55) in tRNA. In terms of biological role, responsible for synthesis of pseudouridine from uracil-55 in the psi GC loop of transfer RNAs. The protein is tRNA pseudouridine synthase B of Aeromonas salmonicida (strain A449).